The primary structure comprises 197 residues: Small ribosomal subunit protein uS5 (197 aa).

The disordered stretch occupies residues 1–27; sequence MAEREQRGGRDQRGGGRERKEREERDS. Residues 29 to 92 form the S5 DRBM domain; sequence FVDKLVHINR…ESAKRNLTRV (64 aa).

It belongs to the universal ribosomal protein uS5 family. As to quaternary structure, part of the 30S ribosomal subunit. Contacts proteins S4 and S8.

With S4 and S12 plays an important role in translational accuracy. Functionally, located at the back of the 30S subunit body where it stabilizes the conformation of the head with respect to the body. This Bradyrhizobium diazoefficiens (strain JCM 10833 / BCRC 13528 / IAM 13628 / NBRC 14792 / USDA 110) protein is Small ribosomal subunit protein uS5.